The following is a 498-amino-acid chain: Mitogen-activated protein kinase 15 (498 aa).

Residues 13–304 enclose the Protein kinase domain; it reads YKIEEVIGKG…AEEALADPYF (292 aa). ATP contacts are provided by residues 19–27 and lysine 42; that span reads IGKGSYGVV. Aspartate 139 serves as the catalytic Proton acceptor. A Phosphothreonine modification is found at threonine 175. Positions 175 to 177 match the TXY motif; that stretch reads TDY. The residue at position 177 (tyrosine 177) is a Phosphotyrosine. Disordered stretches follow at residues 388-411 and 470-498; these read STAAPPERQHNSLPRPSVLYSDDR and STAEQYEHRRTDRNPALATNTVSPRGSYP. Over residues 486–498 the composition is skewed to polar residues; the sequence is LATNTVSPRGSYP.

This sequence belongs to the protein kinase superfamily. CMGC Ser/Thr protein kinase family. MAP kinase subfamily. Post-translationally, dually phosphorylated on Thr-175 and Tyr-177, which activates the enzyme.

The catalysed reaction is L-seryl-[protein] + ATP = O-phospho-L-seryl-[protein] + ADP + H(+). It carries out the reaction L-threonyl-[protein] + ATP = O-phospho-L-threonyl-[protein] + ADP + H(+). Activated by threonine and tyrosine phosphorylation. The sequence is that of Mitogen-activated protein kinase 15 (MPK15) from Oryza sativa subsp. japonica (Rice).